The chain runs to 988 residues: MDGFAGSLDDSISAASTSDVQDRLSALESRVQQQEDEITVLKAALADVLRRLAISEDHVASVKKSMPSKGQPSLREAISMSCITNGSGISRKQNHTSSVSIARKETLSSAAKSGTEKKKEKPQGQREKKEDSHSNDQSPQIRASPSPQPSSQPLQINRQTPESKSSAPIKSIKRPPTAEKSHNSWENSDDSRNKLMKTVSTSKLISKVIKNADKHKDVIVNQAKMSTREKNSQEGEYIKMFMRGRPITMFIPSDVDNYDDIRTELPPEKLKLEWVYGYRGKDCRANVYLLPTGEIVYFIASVVVLFNYEERTQRHYLGHTDCVRCLAVHPDKIRIATGQIAGVDKDGRPLQPHVRVWDSVSLTTLHVIGLGTFERGVGCLDFSKADSGVHLCVIDDSNEHMLTVWDWQKKSKIAEIKTTNEVVLAVEFHPTDANTIITCGKSHIFFWTWSGNSLTRKQGIFGKYEKPKFVQCLAFLGNGDVLTGDSGGVMLIWSKTMVEPPPGKGPKGVYQINRQIKAHDGSVFTLCQMRNGMLLTGGGKDRKIILWDHDLNLEREIEVPDQYGTIRAVAEGRAEQFLVGTSRNFILRGTFNDGFQIEVQGHRDELWGLATHPFKDLLLTCAQDRQVCMWNSVEHRLEWTRLVDEPGHCADFHPSGTVVAIGTHSGRWFVLDAETRDLVSIHTDGNEQLSVMRYSVDGTLLAVGSHDNFIYLYTVLENGRKYSRYGKCTGHSSYITHLDWSPDNKHIMSNSGDYEILYWDIENGCKLIRNRSDCKDIDWTTYTCVLGFQVFGVWPEGSDGTDINALVRSHNRRVIAVADDFCKVHLFQYPCSKAKAPSHKYSAHSSHVTNVSFTHNDSHLISTGGKDMSIIQWKLVEKLPVPQNEVITDASVTKTPASSSETARPSNSPPLPPSLPLTGTAEEESRMGSSPTLVENSLEQIAEPSEEQSEWGSEDLGVVIDEEPASELSETQGATELPEEERGITPLC.

The residue at position 1 (Met1) is an N-acetylmethionine. A microtubule-binding region spans residues 1–260 (MDGFAGSLDD…IPSDVDNYDD (260 aa)). Phosphoserine occurs at positions 7, 13, 16, 61, and 79. The stretch at 14-63 (AASTSDVQDRLSALESRVQQQEDEITVLKAALADVLRRLAISEDHVASVK) forms a coiled coil. At Thr96 the chain carries Phosphothreonine. Residues 106–194 (TLSSAAKSGT…WENSDDSRNK (89 aa)) are disordered. Basic and acidic residues predominate over residues 114 to 134 (GTEKKKEKPQGQREKKEDSHS). Ser134 is modified (phosphoserine; by NEK7). Residues 137–155 (QSPQIRASPSPQPSSQPLQ) are compositionally biased toward low complexity. Ser144 is modified (phosphoserine; by NEK6). Ser146 is subject to Phosphoserine; by NEK7. Polar residues predominate over residues 156–168 (INRQTPESKSSAP). A Phosphoserine modification is found at Ser171. Residues 176-193 (PTAEKSHNSWENSDDSRN) show a composition bias toward basic and acidic residues. Phosphoserine is present on Ser200. Thr201 is modified (phosphothreonine). Phosphotyrosine is present on Tyr237. Position 248 is a phosphothreonine (Thr248). WD repeat units lie at residues 270–308 (LKLEWVYGYRGKDCRANVYLLPTGEIVYFIASVVVLFNY), 312–359 (TQRH…VWDS), 367–407 (VIGL…VWDW), 414–449 (AEIKTTNEVVLAVEFHPTDANTIITCGKSHIFFWTW), 456–495 (RKQGIFGKYEKPKFVQCLAFLGNGDVLTGDSGGVMLIWSK), 511–549 (QINRQIKAHDGSVFTLCQMRNGMLLTGGGKDRKIILWDH), 554–590 (EREIEVPDQYGTIRAVAEGRAEQFLVGTSRNFILRGT), 593–632 (DGFQIEVQGHRDELWGLATHPFKDLLLTCAQDRQVCMWNS), 636–673 (RLEWTRLVDEPGHCADFHPSGTVVAIGTHSGRWFVLDA), 679–715 (VSIHTDGNEQLSVMRYSVDGTLLAVGSHDNFIYLYTV), 722–761 (YSRYGKCTGHSSYITHLDWSPDNKHIMSNSGDYEILYWDI), 771–829 (RSDC…LFQY), and 836–875 (APSHKYSAHSSHVTNVSFTHNDSHLISTGGKDMSIIQWKL). A Phosphothreonine; by NEK6 and NEK7 modification is found at Thr620. The interval 887–988 (ITDASVTKTP…EEERGITPLC (102 aa)) is disordered. The span at 890–904 (ASVTKTPASSSETAR) shows a compositional bias: polar residues. Phosphoserine occurs at positions 906, 908, and 914. Residues 927 to 939 (MGSSPTLVENSLE) are compositionally biased toward polar residues. Residues 944–953 (PSEEQSEWGS) show a composition bias toward acidic residues.

The protein belongs to the WD repeat EMAP family. Homotrimer; self-association is mediated by the N-terminal coiled coil. Interacts (via WD repeats) with NUDC. Interacts with alpha- and beta-tubulin during mitosis. In terms of processing, phosphorylated during mitosis. Phosphorylation at Ser-144 and Ser-146 promotes its dissociation from microtubules during mitosis which is required for efficient chromosome congression.

It is found in the cytoplasm. It localises to the cytoskeleton. The protein localises to the spindle. Its subcellular location is the microtubule organizing center. The protein resides in the midbody. Its function is as follows. Essential for the stability of microtubules (MTs). Essential for the formation of MTs. Required for the organization of the mitotic spindle and for the proper attachment of kinetochores to MTs. Promotes the recruitment of NUDC to the mitotic spindle for mitotic progression. This Mus musculus (Mouse) protein is Echinoderm microtubule-associated protein-like 4 (Eml4).